Here is a 960-residue protein sequence, read N- to C-terminus: Importin alpha re-exporter (960 aa).

HEAT repeat units lie at residues 1-33, 34-73, 74-120, 121-157, 158-220, 221-278, 279-323, 324-392, 393-445, 446-489, 490-528, 529-586, 587-630, 631-674, 675-716, 717-751, 752-794, and 795-826; these read MSDL…LETQ, DGFG…VDEN, GNHL…FPDR, WPTL…WRPL, FRSD…NCQD, IPEF…TRYE, DVFG…TRIP, KYFE…KEKN, EVLV…GVSS, TNNL…RNQL, TKAQ…TIRE, SNTS…TSED, SIQP…LNYT, QRQN…QSAT, IPES…SSIF, PDLV…LLID, MNRL…NKLG, and SDFL…PTIG. Positions 23 to 96 constitute an Importin N-terminal domain; it reads SERNLRQLET…KKEIVPLMIS (74 aa). Positions 366–381 match the Nuclear localization signal motif; the sequence is RRDLEGSDTDTRRRAC. Residues 827-928 form an HEAT 19; with insert repeat; it reads NLLDRKIALI…RLYVAEALNK (102 aa). The stretch at 929–960 is one HEAT 20 repeat; sequence YNAISGNTFLNTILPQLTQENQVKLNQLLVGN.

This sequence belongs to the XPO2/CSE1 family. In terms of assembly, binds with high affinity to SRP1 only in the presence of RanGTP. The complex is dissociated by the RanGTP-binding protein YRB1.

It localises to the cytoplasm. The protein resides in the nucleus. Export receptor for importin alpha (SRP1). Mediates importin-alpha re-export from the nucleus to the cytoplasm after import substrates have been released into the nucleoplasm. This is Importin alpha re-exporter (CSE1) from Saccharomyces cerevisiae (strain ATCC 204508 / S288c) (Baker's yeast).